Reading from the N-terminus, the 692-residue chain is Elongation factor G (692 aa).

The region spanning 8 to 282 (ENTRNIGIMA…AVLDYLPSPL (275 aa)) is the tr-type G domain. GTP contacts are provided by residues 17–24 (AHIDAGKT), 81–85 (DTPGH), and 135–138 (NKMD).

The protein belongs to the TRAFAC class translation factor GTPase superfamily. Classic translation factor GTPase family. EF-G/EF-2 subfamily.

Its subcellular location is the cytoplasm. Catalyzes the GTP-dependent ribosomal translocation step during translation elongation. During this step, the ribosome changes from the pre-translocational (PRE) to the post-translocational (POST) state as the newly formed A-site-bound peptidyl-tRNA and P-site-bound deacylated tRNA move to the P and E sites, respectively. Catalyzes the coordinated movement of the two tRNA molecules, the mRNA and conformational changes in the ribosome. In Halalkalibacterium halodurans (strain ATCC BAA-125 / DSM 18197 / FERM 7344 / JCM 9153 / C-125) (Bacillus halodurans), this protein is Elongation factor G (fusA).